The primary structure comprises 84 residues: ICP35 (84 aa).

In Crustacea (WSSV), this protein is ICP35.